A 248-amino-acid polypeptide reads, in one-letter code: Anamorsin homolog (248 aa).

Residues 4-129 are N-terminal SAM-like domain; sequence FKGLQKSLYI…ETGSSARLSF (126 aa). Residues 130-161 form a linker region; it reads AKKNASAVNVWKISGDDEELIDEEELLDEEDK. Positions 172, 181, 184, and 186 each coordinate [2Fe-2S] cluster. The segment at 172–186 is fe-S binding site A; it reads CSTTGKRKACKNCSC. Positions 209, 212, 220, and 223 each coordinate [4Fe-4S] cluster. 2 consecutive short sequence motifs (cx2C motif) follow at residues 209–212 and 220–223; these read CGNC and CSTC. Residues 209-223 are fe-S binding site B; sequence CGNCYLGDAFRCSTC.

It belongs to the anamorsin family. As to quaternary structure, monomer. The cofactor is [2Fe-2S] cluster. [4Fe-4S] cluster is required as a cofactor.

The protein resides in the cytoplasm. Its subcellular location is the mitochondrion intermembrane space. In terms of biological role, component of the cytosolic iron-sulfur (Fe-S) protein assembly (CIA) machinery. Required for the maturation of extramitochondrial Fe-S proteins. Part of an electron transfer chain functioning in an early step of cytosolic Fe-S biogenesis, facilitating the de novo assembly of a [4Fe-4S] cluster on the cytosolic Fe-S scaffold complex. Electrons are transferred from NADPH via a FAD- and FMN-containing diflavin oxidoreductase. Together with the diflavin oxidoreductase, also required for the assembly of the diferric tyrosyl radical cofactor of ribonucleotide reductase (RNR), probably by providing electrons for reduction during radical cofactor maturation in the catalytic small subunit. The chain is Anamorsin homolog from Drosophila yakuba (Fruit fly).